The sequence spans 369 residues: 2-aminoethylphosphonate--pyruvate transaminase (369 aa).

The residue at position 193 (Lys-193) is an N6-(pyridoxal phosphate)lysine.

This sequence belongs to the class-V pyridoxal-phosphate-dependent aminotransferase family. PhnW subfamily. Homodimer. It depends on pyridoxal 5'-phosphate as a cofactor.

The catalysed reaction is (2-aminoethyl)phosphonate + pyruvate = phosphonoacetaldehyde + L-alanine. Functionally, involved in phosphonate degradation. This chain is 2-aminoethylphosphonate--pyruvate transaminase, found in Pseudomonas fluorescens (strain ATCC BAA-477 / NRRL B-23932 / Pf-5).